The sequence spans 79 residues: Schistosomin (79 aa).

Post-translationally, contains four disulfide bonds. As to expression, growth-controlling neurosecretory light green cells, in the cerebral ganglia of the CNS.

The protein resides in the secreted. Its function is as follows. Anti-gonadotropic neuropeptide. It also decreases the binding capacity of calfluxin to membrane-bound receptors of the albumen gland. This leads to inhibition of the reproductive activities of the infected snail. The sequence is that of Schistosomin from Lymnaea stagnalis (Great pond snail).